The following is a 316-amino-acid chain: GTP cyclohydrolase FolE2 1 (316 aa).

This sequence belongs to the GTP cyclohydrolase IV family.

It catalyses the reaction GTP + H2O = 7,8-dihydroneopterin 3'-triphosphate + formate + H(+). It functions in the pathway cofactor biosynthesis; 7,8-dihydroneopterin triphosphate biosynthesis; 7,8-dihydroneopterin triphosphate from GTP: step 1/1. In terms of biological role, converts GTP to 7,8-dihydroneopterin triphosphate. This chain is GTP cyclohydrolase FolE2 1, found in Burkholderia lata (strain ATCC 17760 / DSM 23089 / LMG 22485 / NCIMB 9086 / R18194 / 383).